A 138-amino-acid chain; its full sequence is Histone H2B.4 (138 aa).

A compositionally biased stretch (basic and acidic residues) spans 1-39 (MAPKAAEKKPAEKKPAGKAPAEKLPKAEKKISKDAGGSE). The disordered stretch occupies residues 1-48 (MAPKAAEKKPAEKKPAGKAPAEKLPKAEKKISKDAGGSEKKKKKSKKS). Alanine 2 carries the post-translational modification N,N,N-trimethylalanine; alternate. Position 2 is a n,N-dimethylalanine; alternate (alanine 2). Alanine 2 carries the post-translational modification N-methylalanine; alternate. Residue lysine 4 is modified to N6-methyllysine. An N6-acetyllysine mark is found at lysine 8 and lysine 13. Lysine 14 carries the N6,N6-dimethyllysine modification. N6-acetyllysine occurs at positions 18, 23, 29, and 30. Lysine 135 is covalently cross-linked (Glycyl lysine isopeptide (Lys-Gly) (interchain with G-Cter in ubiquitin)).

The protein belongs to the histone H2B family. The nucleosome is a histone octamer containing two molecules each of H2A, H2B, H3 and H4 assembled in one H3-H4 heterotetramer and two H2A-H2B heterodimers. The octamer wraps approximately 147 bp of DNA. In terms of processing, can be acetylated to form H2BK6ac, H2BK33ac and H2BK34ac. Post-translationally, monoubiquitinated by BRE1 to form H2BK143ub1 and deubiquitinated by UBP26. Required for heterochromatic histone H3 di- and trimethylation at H3K4me. May give a specific tag for epigenetic transcriptional activation.

The protein localises to the nucleus. Its subcellular location is the chromosome. In terms of biological role, core component of nucleosome. Nucleosomes wrap and compact DNA into chromatin, limiting DNA accessibility to the cellular machineries which require DNA as a template. Histones thereby play a central role in transcription regulation, DNA repair, DNA replication and chromosomal stability. DNA accessibility is regulated via a complex set of post-translational modifications of histones, also called histone code, and nucleosome remodeling. The protein is Histone H2B.4 of Arabidopsis thaliana (Mouse-ear cress).